A 156-amino-acid polypeptide reads, in one-letter code: V-type proton ATPase 16 kDa proteolipid subunit c (156 aa).

The Lumenal segment spans residues 1-7 (MAENPIY). A helical membrane pass occupies residues 8 to 30 (GPFFGVMGAASAIIFSALGAAYG). Over 31–52 (TAKSGTGIAAMSVMRPELIMKS) the chain is Cytoplasmic. Residues 53-73 (IIPVVMAGIIAIYGLVVAVLI) form a helical membrane-spanning segment. Residues 74 to 92 (AGSLDAPSNNYTLYKGFIH) lie on the Lumenal side of the membrane. Residues 93–114 (LGAGLAVGFSGLAAGFAIGIVG) traverse the membrane as a helical segment. Residues 115 to 126 (DAGVRGTAQQPR) lie on the Cytoplasmic side of the membrane. Residues 127–152 (LFVGMILILIFAEVLGLYGLIVAIYL) form a helical membrane-spanning segment. Over 153 to 156 (YTKQ) the chain is Lumenal.

It belongs to the V-ATPase proteolipid subunit family. In terms of assembly, V-ATPase is a heteromultimeric enzyme made up of two complexes: the ATP-hydrolytic V1 complex and the proton translocation V0 complex. The V1 complex consists of three catalytic AB heterodimers that form a heterohexamer, three peripheral stalks each consisting of EG heterodimers, one central rotor including subunits D and F, and the regulatory subunits C and H. The proton translocation complex V0 consists of the proton transport subunit a, a ring of proteolipid subunits c9c'', rotary subunit d, subunits e and f, and the accessory subunits VhaAC45 and ATP6AP2.

The protein localises to the membrane. In terms of biological role, proton-conducting pore forming subunit of the V0 complex of vacuolar(H+)-ATPase (V-ATPase), a multisubunit enzyme composed of a peripheral complex (V1) that hydrolyzes ATP and a membrane integral complex (V0) that translocates protons. V-ATPase is responsible for acidifying and maintaining the pH of intracellular compartments and in some cell types, is targeted to the plasma membrane, where it is responsible for acidifying the extracellular environment. This chain is V-type proton ATPase 16 kDa proteolipid subunit c (VHA16), found in Heliothis virescens (Tobacco budworm moth).